We begin with the raw amino-acid sequence, 200 residues long: General odorant-binding protein 70 (200 aa).

Residues 1–29 (MRRQYSMWASTVAVIACGSALMLLHPVGA) form the signal peptide. 2 disulfide bridges follow: Cys-105-Cys-174 and Cys-152-Cys-183.

Belongs to the PBP/GOBP family.

It is found in the secreted. Functionally, present in the aqueous fluid surrounding olfactory sensory dendrites and are thought to aid in the capture and transport of hydrophobic odorants into and through this fluid. In Anopheles gambiae (African malaria mosquito), this protein is General odorant-binding protein 70 (Obp70).